The sequence spans 208 residues: ATP synthase subunit beta, chloroplastic (208 aa).

Belongs to the ATPase alpha/beta chains family. F-type ATPases have 2 components, CF(1) - the catalytic core - and CF(0) - the membrane proton channel. CF(1) has five subunits: alpha(3), beta(3), gamma(1), delta(1), epsilon(1). CF(0) has four main subunits: a(1), b(1), b'(1) and c(9-12).

The protein localises to the plastid. It localises to the chloroplast thylakoid membrane. The enzyme catalyses ATP + H2O + 4 H(+)(in) = ADP + phosphate + 5 H(+)(out). Functionally, produces ATP from ADP in the presence of a proton gradient across the membrane. The catalytic sites are hosted primarily by the beta subunits. The sequence is that of ATP synthase subunit beta, chloroplastic (atpB) from Hypolepis hostilis (Fern).